The following is a 418-amino-acid chain: Serpin H1 (418 aa).

A signal peptide spans 1–18 (MRALLLISTICLLARALA). Lys-94 carries the post-translational modification N6-succinyllysine. N-linked (GlcNAc...) asparagine glycosylation is found at Asn-120 and Asn-125. Ser-141 bears the Phosphoserine mark. Lys-207 bears the N6-acetyllysine mark. Lys-296 carries the post-translational modification N6-succinyllysine. Position 319 is an N6-acetyllysine (Lys-319). The Prevents secretion from ER signature appears at 415-418 (RDEL).

This sequence belongs to the serpin family.

The protein localises to the endoplasmic reticulum lumen. Binds specifically to collagen. Could be involved as a chaperone in the biosynthetic pathway of collagen. The protein is Serpin H1 (SERPINH1) of Bos taurus (Bovine).